A 290-amino-acid polypeptide reads, in one-letter code: uncharacterized protein (290 aa).

Residues 153–178 form a disordered region; the sequence is EMVPITTSSTTPRSKGDEATSTGAFP. Residues 157-178 show a composition bias toward polar residues; it reads ITTSSTTPRSKGDEATSTGAFP. A helical transmembrane segment spans residues 202-222; sequence LIAVTLLLGGAAIIVFVIFEV. The interval 246–276 is disordered; the sequence is KEEDQKPGTTESQLDSQPEKVKHNVPNSSDS. A compositionally biased stretch (polar residues) spans 252–261; that stretch reads PGTTESQLDS.

The protein localises to the membrane. This is an uncharacterized protein from Mus musculus (Mouse).